A 430-amino-acid chain; its full sequence is Histidine--tRNA ligase (430 aa).

The protein belongs to the class-II aminoacyl-tRNA synthetase family. As to quaternary structure, homodimer.

The protein resides in the cytoplasm. The enzyme catalyses tRNA(His) + L-histidine + ATP = L-histidyl-tRNA(His) + AMP + diphosphate + H(+). The protein is Histidine--tRNA ligase of Lactococcus lactis subsp. cremoris (strain MG1363).